Here is a 373-residue protein sequence, read N- to C-terminus: MKYTKCNFMMSVLGIIIYVTDLVADIVLSVRYFHDGQYVLGVLTLSFVLCGTLIVHCFSYSWLKADLEKAGQENERYFLLLHCLQGGVFTRYWFALRTGYHVVFKHSDRKSNFMEEQTDPHKEAIDMATDLSMLRLFETYLEGCPQLILQLYAFLECGQANLSQCMVIMVSCCAISWSTVDYQIALRKSLPDKNLLRGLWPKLMYLFYKLLTLLSWMLSVVLLLFVDVRVALLLLLFLWITGFIWAFINHTQFCNSVSMEFLYRIVVGFILVFTFFNIKGQNTKCPMSCYYTVRVLGTLGILTVFWIYPLSIFNSDYFIPISATIVLALLLGIIFLGVYYGNFHPNRNVEPQLDETDGKAPQRDCRIRYFLMD.

8 helical membrane passes run 8-28, 38-58, 166-186, 206-226, 230-250, 256-276, 295-315, and 318-338; these read FMMS…DIVL, YVLG…VHCF, MVIM…QIAL, LFYK…LLFV, VALL…FINH, SVSM…FTFF, VLGT…IFNS, and FIPI…FLGV.

It belongs to the XK family. In terms of processing, undergoes proteolytic processing by caspase-3 (CASP3), caspase-6 (CASP6) and caspase-7 (CASP7) to generate the XK-related protein 9, processed form, leading to its activation. In terms of tissue distribution, highly expressed in the small intestines; weakly expressed in the pancreas, liver, stomach, and large intestines.

It localises to the cell membrane. It carries out the reaction a 1,2-diacyl-sn-glycero-3-phospho-L-serine(in) = a 1,2-diacyl-sn-glycero-3-phospho-L-serine(out). Activated upon caspase cleavage to generate the XK-related protein 9, processed form. Does not act prior the onset of apoptosis. In terms of biological role, phospholipid scramblase that promotes phosphatidylserine exposure on apoptotic cell surface. Phosphatidylserine is a specific marker only present at the surface of apoptotic cells and acts as a specific signal for engulfment. The polypeptide is XK-related protein 9 (Mus musculus (Mouse)).